Here is an 82-residue protein sequence, read N- to C-terminus: UPF0248 protein Mevan_1298 (82 aa).

The protein belongs to the UPF0248 family.

This Methanococcus vannielii (strain ATCC 35089 / DSM 1224 / JCM 13029 / OCM 148 / SB) protein is UPF0248 protein Mevan_1298.